Consider the following 805-residue polypeptide: Probable exo-1,4-beta-xylosidase xlnD (805 aa).

The N-terminal stretch at 1–17 (MAVAALALLALLPQALG) is a signal peptide. N-linked (GlcNAc...) asparagine glycans are attached at residues asparagine 20, asparagine 115, asparagine 140, asparagine 235, and asparagine 244. The active site involves aspartate 308. N-linked (GlcNAc...) asparagine glycosylation is found at asparagine 350, asparagine 383, asparagine 405, asparagine 434, asparagine 445, asparagine 486, asparagine 490, asparagine 622, asparagine 653, asparagine 667, asparagine 689, and asparagine 711.

Belongs to the glycosyl hydrolase 3 family.

The protein resides in the secreted. The catalysed reaction is Hydrolysis of (1-&gt;4)-beta-D-xylans, to remove successive D-xylose residues from the non-reducing termini.. It participates in glycan degradation; xylan degradation. Its function is as follows. Xylan 1,4-beta-xylosidase involved in the hydrolysis of xylan, a major structural heterogeneous polysaccharide found in plant biomass representing the second most abundant polysaccharide in the biosphere, after cellulose. The protein is Probable exo-1,4-beta-xylosidase xlnD (xlnD) of Aspergillus aculeatus.